The chain runs to 190 residues: MPVPSKERVTELISDLVQRQGYDVEDVAVTLAGKHSAVRIMVDSDAGLELDAVANLSHEISEVFDSVSDFGESPYTLEVTSPGIDRPLTHERHWRRARGRKARIDLAHETVVGRIGALDGDSVAVVIGSRTGPDVRRIALADIQKAVVQVEFSKPDPRELELAGGIPEGRVAPADADASEDEEVVEGLDK.

Residues 159 to 190 are disordered; sequence ELELAGGIPEGRVAPADADASEDEEVVEGLDK. The segment covering 177–190 has biased composition (acidic residues); sequence DASEDEEVVEGLDK.

It belongs to the RimP family.

The protein localises to the cytoplasm. In terms of biological role, required for maturation of 30S ribosomal subunits. This chain is Ribosome maturation factor RimP, found in Rhodococcus opacus (strain B4).